The following is a 1201-amino-acid chain: Transcription-repair-coupling factor (1201 aa).

The segment at 1 to 27 is disordered; that stretch reads MRLLITLGPSGSTHGHSLHTDAGRRRG. The Helicase ATP-binding domain occupies 670 to 831; it reads DMQKPEPMDR…MSGVRDMSII (162 aa). 683–690 contributes to the ATP binding site; it reads GDVGYGKT. The DEEQ box signature appears at 784-787; that stretch reads DEEQ. Residues 852 to 1006 enclose the Helicase C-terminal domain; that stretch reads VVKEAIEREV…GFSIASHDLE (155 aa).

It in the N-terminal section; belongs to the UvrB family. The protein in the C-terminal section; belongs to the helicase family. RecG subfamily.

The protein resides in the cytoplasm. Couples transcription and DNA repair by recognizing RNA polymerase (RNAP) stalled at DNA lesions. Mediates ATP-dependent release of RNAP and its truncated transcript from the DNA, and recruitment of nucleotide excision repair machinery to the damaged site. The protein is Transcription-repair-coupling factor of Myxococcus xanthus.